We begin with the raw amino-acid sequence, 413 residues long: Gamma-glutamyl phosphate reductase (413 aa).

Belongs to the gamma-glutamyl phosphate reductase family.

Its subcellular location is the cytoplasm. It carries out the reaction L-glutamate 5-semialdehyde + phosphate + NADP(+) = L-glutamyl 5-phosphate + NADPH + H(+). It functions in the pathway amino-acid biosynthesis; L-proline biosynthesis; L-glutamate 5-semialdehyde from L-glutamate: step 2/2. Its function is as follows. Catalyzes the NADPH-dependent reduction of L-glutamate 5-phosphate into L-glutamate 5-semialdehyde and phosphate. The product spontaneously undergoes cyclization to form 1-pyrroline-5-carboxylate. This chain is Gamma-glutamyl phosphate reductase, found in Salinispora tropica (strain ATCC BAA-916 / DSM 44818 / JCM 13857 / NBRC 105044 / CNB-440).